The following is a 222-amino-acid chain: Probable fructose-6-phosphate aldolase (222 aa).

Catalysis depends on Lys-87, which acts as the Schiff-base intermediate with substrate.

Belongs to the transaldolase family. Type 3A subfamily.

The protein resides in the cytoplasm. It catalyses the reaction beta-D-fructose 6-phosphate = dihydroxyacetone + D-glyceraldehyde 3-phosphate. In terms of biological role, catalyzes the reversible formation of fructose 6-phosphate from dihydroxyacetone and D-glyceraldehyde 3-phosphate via an aldolization reaction. The polypeptide is Probable fructose-6-phosphate aldolase (Streptococcus pneumoniae (strain ATCC 700669 / Spain 23F-1)).